The following is a 483-amino-acid chain: Glutarate-semialdehyde dehydrogenase (483 aa).

NADP(+) contacts are provided by residues 156 to 157 (WN), 180 to 183 (KPAS), and 233 to 234 (GS). The active-site Proton acceptor is the Glu-255. Leu-256 is a binding site for NADP(+). Cys-289 acts as the Nucleophile in catalysis. Glu-386 provides a ligand contact to NADP(+).

Belongs to the aldehyde dehydrogenase family.

The enzyme catalyses 5-oxopentanoate + NADP(+) + H2O = glutarate + NADPH + 2 H(+). The protein operates within amino-acid degradation. In terms of biological role, catalyzes the conversion of 5-oxopentanoate (glutarate semialdehyde) to glutarate. Involved in L-lysine degradation. The protein is Glutarate-semialdehyde dehydrogenase of Pseudomonas aeruginosa (strain ATCC 15692 / DSM 22644 / CIP 104116 / JCM 14847 / LMG 12228 / 1C / PRS 101 / PAO1).